The chain runs to 118 residues: Large ribosomal subunit protein bL20 (118 aa).

Belongs to the bacterial ribosomal protein bL20 family.

Its function is as follows. Binds directly to 23S ribosomal RNA and is necessary for the in vitro assembly process of the 50S ribosomal subunit. It is not involved in the protein synthesizing functions of that subunit. This is Large ribosomal subunit protein bL20 from Francisella tularensis subsp. novicida (strain U112).